The sequence spans 322 residues: Hydroxypyruvate reductase (322 aa).

Residues 160–161, aspartate 180, 211–212, 238–240, and aspartate 264 contribute to the NAD(+) site; these read RI, CP, and NSR. Arginine 240 is a catalytic residue. The active site involves glutamate 269. Histidine 288 acts as the Proton donor in catalysis.

It belongs to the D-isomer specific 2-hydroxyacid dehydrogenase family.

The enzyme catalyses (R)-glycerate + NAD(+) = 3-hydroxypyruvate + NADH + H(+). It participates in carbohydrate metabolism. In terms of biological role, involved in catabolism of D-apiose. Catalyzes the reduction of 3-hydroxypyruvate to glycerate. The chain is Hydroxypyruvate reductase from Blautia hydrogenotrophica (strain DSM 10507 / JCM 14656 / S5a33) (Ruminococcus hydrogenotrophicus).